Reading from the N-terminus, the 2286-residue chain is Unconventional myosin-IXAb (2286 aa).

Residues 16–114 (SEFTLRVYPG…YRFLLREKNL (99 aa)) form the Ras-associating domain. One can recognise a Myosin motor domain in the interval 148–971 (AQFVADLCSL…LRQRLQDELH (824 aa)). The chain crosses the membrane as a helical span at residues 178 to 198 (IYTYVGSILIAVNPFKFLPIY). ATP is bound at residue 242-249 (GESGSGKT). The segment at 853 to 875 (LNKLMETLGQSEPYFVKCIRSNA) is actin-binding. IQ domains follow at residues 976 to 996 (RRIV…HFCR), 1025 to 1054 (QQGA…AVLI), 1066 to 1095 (RNTA…AAVT), and 1089 to 1118 (QRRA…QQCR). Positions 976–1113 (RRIVCLQRSF…QSRQRCRILR (138 aa)) are neck or regulatory domain. Residues 1114-2254 (EQQCREQSKH…PRANRSCPPK (1141 aa)) are tail. Disordered stretches follow at residues 1118-1279 (REQS…QIRE), 1308-1341 (DVPL…FSVS), 1455-1588 (CEED…EPML), and 1732-1754 (DGTI…SDTV). The segment covering 1123 to 1133 (HPSTVTKSLHQ) has biased composition (polar residues). Basic and acidic residues predominate over residues 1134 to 1149 (NTEEAEKLEEVWEKQT). Over residues 1263 to 1273 (PINSAPQTPNR) the composition is skewed to polar residues. Residues 1455-1465 (CEEDEDDEYED) are compositionally biased toward acidic residues. Positions 1485 to 1501 (CVFHSDSEMSSQKEQKR) are enriched in basic and acidic residues. Basic residues predominate over residues 1529–1542 (RGKMRFWSKSKHGD). 2 stretches are compositionally biased toward basic and acidic residues: residues 1550-1562 (RSAD…RRND) and 1572-1585 (GVSE…ENRE). The segment at 1759-1808 (GHIFKSTQYSIPTYCEFCSSLIWMMDKACVCKLCRYACHKKCCLRMTTKC) adopts a Phorbol-ester/DAG-type zinc-finger fold. Positions 1823 to 2011 (VELSRLTSDE…LIICEQMRKY (189 aa)) constitute a Rho-GAP domain. Residues 2032 to 2049 (LTHIRRSMGKSRARKSGH) are compositionally biased toward basic residues. 2 disordered regions span residues 2032-2087 (LTHI…QQEE) and 2113-2286 (PRAS…EFMV). Residues 2080–2107 (QAAMQQEEKVLTQQIENLQKEKEELTYE) are a coiled coil. Composition is skewed to low complexity over residues 2176-2192 (SLDS…SVSS) and 2200-2211 (SSSSGPLFSSSS). Over residues 2226–2238 (EQASLSARCASSS) the composition is skewed to polar residues. Over residues 2254-2270 (KPREPGDTGGRRREHEF) the composition is skewed to basic and acidic residues.

The protein belongs to the TRAFAC class myosin-kinesin ATPase superfamily. Myosin family.

It localises to the membrane. Its subcellular location is the cytoplasm. The protein resides in the synapse. It is found in the cell projection. The protein localises to the growth cone. In terms of biological role, myosins are actin-based motor molecules with ATPase activity. Unconventional myosins serve in intracellular movements. Regulates Rho by stimulating it's GTPase activity in neurons. Required for the regulation of neurite branching and motor neuron axon guidance. This chain is Unconventional myosin-IXAb (myo9ab), found in Danio rerio (Zebrafish).